The following is a 536-amino-acid chain: Protein scd2/ral3 (536 aa).

The 63-residue stretch at 24–86 (PPRKVIRALY…PVSHFEEIGK (63 aa)) folds into the SH3 1 domain. The tract at residues 88 to 115 (VKSERDSDGSGQISFTDLTTNSSTTRSS) is disordered. Residues 101 to 115 (SFTDLTTNSSTTRSS) show a composition bias toward low complexity. An SH3 2 domain is found at 123 to 185 (SQPLFGIVQF…PLSFIQLRDL (63 aa)). Positions 293–413 (SSEPTVVAAM…LFFLPLDGDV (121 aa)) constitute a PX domain. Positions 459 to 533 (TCKVKVRLGD…ESGVLLFAER (75 aa)) constitute a PB1 domain.

As to quaternary structure, scd1, scd2, cdc42, and ras1, in its GTP-bound state, act cooperatively to form a protein complex.

Functionally, required for mating and morphogenesis. Interacts directly with scd1 and with cdc42. May bridge and facilitate scd1 and cdc42 interactions. The polypeptide is Protein scd2/ral3 (scd2) (Schizosaccharomyces pombe (strain 972 / ATCC 24843) (Fission yeast)).